Reading from the N-terminus, the 963-residue chain is Isoleucine--tRNA ligase (963 aa).

Positions 66 to 76 match the 'HIGH' region motif; sequence PYANGDIHIGH. Residue glutamate 596 coordinates L-isoleucyl-5'-AMP. The short motif at 637-641 is the 'KMSKS' region element; the sequence is KMSKS. Residue lysine 640 participates in ATP binding. 4 residues coordinate Zn(2+): cysteine 926, cysteine 929, cysteine 946, and cysteine 949.

This sequence belongs to the class-I aminoacyl-tRNA synthetase family. IleS type 1 subfamily. As to quaternary structure, monomer. Zn(2+) serves as cofactor.

It is found in the cytoplasm. The enzyme catalyses tRNA(Ile) + L-isoleucine + ATP = L-isoleucyl-tRNA(Ile) + AMP + diphosphate. Its function is as follows. Catalyzes the attachment of isoleucine to tRNA(Ile). As IleRS can inadvertently accommodate and process structurally similar amino acids such as valine, to avoid such errors it has two additional distinct tRNA(Ile)-dependent editing activities. One activity is designated as 'pretransfer' editing and involves the hydrolysis of activated Val-AMP. The other activity is designated 'posttransfer' editing and involves deacylation of mischarged Val-tRNA(Ile). The chain is Isoleucine--tRNA ligase from Cupriavidus pinatubonensis (strain JMP 134 / LMG 1197) (Cupriavidus necator (strain JMP 134)).